The sequence spans 223 residues: UPF0173 metal-dependent hydrolase Amet_4625 (223 aa).

Belongs to the UPF0173 family.

The sequence is that of UPF0173 metal-dependent hydrolase Amet_4625 from Alkaliphilus metalliredigens (strain QYMF).